Reading from the N-terminus, the 333-residue chain is Probable pyridoxal reductase 2 (333 aa).

Y52 acts as the Proton donor in catalysis.

This sequence belongs to the aldo/keto reductase family.

The protein resides in the cytoplasm. The catalysed reaction is pyridoxine + NADP(+) = pyridoxal + NADPH + H(+). Catalyzes the reduction of pyridoxal (PL) with NADPH and oxidation of pyridoxine (PN) with NADP(+). This chain is Probable pyridoxal reductase 2, found in Schizosaccharomyces pombe (strain 972 / ATCC 24843) (Fission yeast).